A 176-amino-acid polypeptide reads, in one-letter code: Zinc finger A20 and AN1 domain-containing stress-associated protein 9 (176 aa).

The segment at Ala-16–Ala-50 adopts an A20-type zinc-finger fold. Zn(2+)-binding residues include Cys-22, Cys-26, Cys-38, Cys-41, Cys-117, Cys-120, Cys-131, Cys-133, Cys-138, His-141, His-147, and Cys-149. An AN1-type zinc finger spans residues Pro-111–Gly-157.

In terms of biological role, may be involved in environmental stress response. The polypeptide is Zinc finger A20 and AN1 domain-containing stress-associated protein 9 (SAP9) (Arabidopsis thaliana (Mouse-ear cress)).